The sequence spans 335 residues: Methionine import ATP-binding protein MetN (335 aa).

An ABC transporter domain is found at 2-241 (IQFQRLHKSY…PQHPTTRRFV (240 aa)). 38-45 (GHSGAGKS) is a binding site for ATP.

This sequence belongs to the ABC transporter superfamily. Methionine importer (TC 3.A.1.24) family. In terms of assembly, the complex is composed of two ATP-binding proteins (MetN), two transmembrane proteins (MetI) and a solute-binding protein (MetQ).

It is found in the cell inner membrane. It carries out the reaction L-methionine(out) + ATP + H2O = L-methionine(in) + ADP + phosphate + H(+). The catalysed reaction is D-methionine(out) + ATP + H2O = D-methionine(in) + ADP + phosphate + H(+). Functionally, part of the ABC transporter complex MetNIQ involved in methionine import. Responsible for energy coupling to the transport system. This Xanthomonas campestris pv. campestris (strain 8004) protein is Methionine import ATP-binding protein MetN.